The primary structure comprises 601 residues: Probable Xaa-Pro aminopeptidase P (601 aa).

4 residues coordinate Mn(2+): Asp398, Asp409, Glu507, and Glu521.

The protein belongs to the peptidase M24B family. It depends on Mn(2+) as a cofactor.

The enzyme catalyses Release of any N-terminal amino acid, including proline, that is linked to proline, even from a dipeptide or tripeptide.. Its function is as follows. Catalyzes the removal of a penultimate prolyl residue from the N-termini of peptides. The chain is Probable Xaa-Pro aminopeptidase P (ampp) from Sclerotinia sclerotiorum (strain ATCC 18683 / 1980 / Ss-1) (White mold).